A 254-amino-acid chain; its full sequence is Alcohol dehydrogenase (254 aa).

An NAD(+)-binding site is contributed by 10-33 (FVAGLGGIGLDTSRELVKRNLKNL). A substrate-binding site is contributed by Ser-138. Tyr-151 (proton acceptor) is an active-site residue.

This sequence belongs to the short-chain dehydrogenases/reductases (SDR) family. As to quaternary structure, homodimer.

The enzyme catalyses a primary alcohol + NAD(+) = an aldehyde + NADH + H(+). It carries out the reaction a secondary alcohol + NAD(+) = a ketone + NADH + H(+). The polypeptide is Alcohol dehydrogenase (Adh) (Drosophila persimilis (Fruit fly)).